The chain runs to 112 residues: Nucleoid-associated protein FTW_0607 (112 aa).

The interval 1-27 is disordered; the sequence is MNFDMSKLMQQAQKMQEQMKKAQQERE. A compositionally biased stretch (basic and acidic residues) spans 17 to 27; it reads EQMKKAQQERE.

Belongs to the YbaB/EbfC family. As to quaternary structure, homodimer.

The protein resides in the cytoplasm. It is found in the nucleoid. Its function is as follows. Binds to DNA and alters its conformation. May be involved in regulation of gene expression, nucleoid organization and DNA protection. In Francisella tularensis subsp. tularensis (strain WY96-3418), this protein is Nucleoid-associated protein FTW_0607.